The chain runs to 414 residues: Serine hydroxymethyltransferase (414 aa).

Residues Leu118 and 122–124 each bind (6S)-5,6,7,8-tetrahydrofolate; that span reads GHL. Position 227 is an N6-(pyridoxal phosphate)lysine (Lys227). (6S)-5,6,7,8-tetrahydrofolate-binding positions include Glu240 and 350-352; that span reads SPF.

Belongs to the SHMT family. In terms of assembly, homodimer. Requires pyridoxal 5'-phosphate as cofactor.

It localises to the cytoplasm. It catalyses the reaction (6R)-5,10-methylene-5,6,7,8-tetrahydrofolate + glycine + H2O = (6S)-5,6,7,8-tetrahydrofolate + L-serine. The protein operates within one-carbon metabolism; tetrahydrofolate interconversion. It participates in amino-acid biosynthesis; glycine biosynthesis; glycine from L-serine: step 1/1. In terms of biological role, catalyzes the reversible interconversion of serine and glycine with tetrahydrofolate (THF) serving as the one-carbon carrier. This reaction serves as the major source of one-carbon groups required for the biosynthesis of purines, thymidylate, methionine, and other important biomolecules. Also exhibits THF-independent aldolase activity toward beta-hydroxyamino acids, producing glycine and aldehydes, via a retro-aldol mechanism. The sequence is that of Serine hydroxymethyltransferase from Bacillus cereus (strain ZK / E33L).